We begin with the raw amino-acid sequence, 511 residues long: 2,3-bisphosphoglycerate-independent phosphoglycerate mutase (511 aa).

2 residues coordinate Mn(2+): aspartate 12 and serine 62. Serine 62 functions as the Phosphoserine intermediate in the catalytic mechanism. Residues histidine 123, 154–155 (RD), arginine 181, arginine 187, 252–255 (RPDR), and lysine 335 each bind substrate. Mn(2+) is bound by residues aspartate 402, histidine 406, aspartate 444, histidine 445, and histidine 462.

This sequence belongs to the BPG-independent phosphoglycerate mutase family. In terms of assembly, monomer. It depends on Mn(2+) as a cofactor.

It carries out the reaction (2R)-2-phosphoglycerate = (2R)-3-phosphoglycerate. It participates in carbohydrate degradation; glycolysis; pyruvate from D-glyceraldehyde 3-phosphate: step 3/5. Catalyzes the interconversion of 2-phosphoglycerate and 3-phosphoglycerate. This Acholeplasma laidlawii (strain PG-8A) protein is 2,3-bisphosphoglycerate-independent phosphoglycerate mutase.